Consider the following 206-residue polypeptide: ATP-dependent dethiobiotin synthetase BioD (206 aa).

12–17 (GVGKTI) is an ATP binding site. Residue Thr-16 coordinates Mg(2+). Lys-32 is an active-site residue. Mg(2+)-binding residues include His-46 and Glu-98. Residue 98–101 (EGAG) participates in ATP binding.

This sequence belongs to the dethiobiotin synthetase family. As to quaternary structure, homodimer. It depends on Mg(2+) as a cofactor.

It localises to the cytoplasm. It catalyses the reaction (7R,8S)-7,8-diammoniononanoate + CO2 + ATP = (4R,5S)-dethiobiotin + ADP + phosphate + 3 H(+). The protein operates within cofactor biosynthesis; biotin biosynthesis; biotin from 7,8-diaminononanoate: step 1/2. In terms of biological role, catalyzes a mechanistically unusual reaction, the ATP-dependent insertion of CO2 between the N7 and N8 nitrogen atoms of 7,8-diaminopelargonic acid (DAPA, also called 7,8-diammoniononanoate) to form a ureido ring. This chain is ATP-dependent dethiobiotin synthetase BioD, found in Novosphingobium aromaticivorans (strain ATCC 700278 / DSM 12444 / CCUG 56034 / CIP 105152 / NBRC 16084 / F199).